A 613-amino-acid chain; its full sequence is Probable indole-3-acetic acid-amido synthetase GH3.12 (613 aa).

This sequence belongs to the IAA-amido conjugating enzyme family. As to expression, expressed in roots.

Functionally, may catalyze the synthesis of indole-3-acetic acid (IAA)-amino acid conjugates, providing a mechanism for the plant to cope with the presence of excess auxin. This Oryza sativa subsp. japonica (Rice) protein is Probable indole-3-acetic acid-amido synthetase GH3.12 (GH3.12).